Here is a 65-residue protein sequence, read N- to C-terminus: Putative antitoxin MJECL31 (65 aa).

The protein belongs to the UPF0165 family.

Possibly the antitoxin component of a type II toxin-antitoxin (TA) system. In Methanocaldococcus jannaschii (strain ATCC 43067 / DSM 2661 / JAL-1 / JCM 10045 / NBRC 100440) (Methanococcus jannaschii), this protein is Putative antitoxin MJECL31.